A 165-amino-acid chain; its full sequence is Protein SprT (165 aa).

In terms of domain architecture, SprT-like spans 22–163 (LAQANLKLGR…RCVHCGEQLT (142 aa)). Zn(2+) is bound at residue His-78. The active site involves Glu-79. Residue His-82 coordinates Zn(2+).

Belongs to the SprT family. It depends on Zn(2+) as a cofactor.

The protein localises to the cytoplasm. The sequence is that of Protein SprT from Escherichia fergusonii (strain ATCC 35469 / DSM 13698 / CCUG 18766 / IAM 14443 / JCM 21226 / LMG 7866 / NBRC 102419 / NCTC 12128 / CDC 0568-73).